The chain runs to 661 residues: Sorting nexin-4 (661 aa).

Polar residues-rich tracts occupy residues 1-10 and 26-36; these read MSDQFTSIQW and HSQVQINSSIN. Disordered regions lie at residues 1 to 49 and 56 to 75; these read MSDQ…QEQD and TVVR…IPPR. A compositionally biased stretch (acidic residues) spans 38 to 49; sequence IEEDQGQEQEQD. A compositionally biased stretch (polar residues) spans 56-70; it reads TVVRGGNDSDSNPNE. In terms of domain architecture, PX spans 77-198; it reads VYIRSKVSQP…HIFLEDSVNW (122 aa). Positions 120, 122, 146, and 165 each coordinate a 1,2-diacyl-sn-glycero-3-phospho-(1D-myo-inositol-3-phosphate). The span at 554 to 572 shows a compositional bias: basic and acidic residues; it reads LRSIKSQERKNEQVHKQDQ. Residues 554 to 661 form a disordered region; the sequence is LRSIKSQERK…LVDVEGLEQW (108 aa). The span at 624–640 shows a compositional bias: polar residues; it reads ASQTESHTQSEPQNDNQ. Over residues 645 to 661 the composition is skewed to acidic residues; sequence DDGSDEGLVDVEGLEQW.

The protein belongs to the sorting nexin family.

The protein resides in the cytoplasm. It is found in the membrane. It localises to the vacuole membrane. Its function is as follows. Sorting nexin involved in the separation or division of vacuoles throughout the entire life cycle of the cells. Required for glucose-induced micropexophagy and ethanol-induced macropexophagy. Involved in the fusion between the pexophagosome and the vacuole. Also involved in the separation or division of vacuoles throughout the entire life cycle of the cells. The chain is Sorting nexin-4 (SNX4) from Komagataella pastoris (Yeast).